The primary structure comprises 344 residues: UDP-3-O-acylglucosamine N-acyltransferase (344 aa).

Catalysis depends on His-248, which acts as the Proton acceptor.

This sequence belongs to the transferase hexapeptide repeat family. LpxD subfamily. In terms of assembly, homotrimer.

It catalyses the reaction a UDP-3-O-[(3R)-3-hydroxyacyl]-alpha-D-glucosamine + a (3R)-hydroxyacyl-[ACP] = a UDP-2-N,3-O-bis[(3R)-3-hydroxyacyl]-alpha-D-glucosamine + holo-[ACP] + H(+). Its pathway is bacterial outer membrane biogenesis; LPS lipid A biosynthesis. Catalyzes the N-acylation of UDP-3-O-acylglucosamine using 3-hydroxyacyl-ACP as the acyl donor. Is involved in the biosynthesis of lipid A, a phosphorylated glycolipid that anchors the lipopolysaccharide to the outer membrane of the cell. The sequence is that of UDP-3-O-acylglucosamine N-acyltransferase from Prochlorococcus marinus (strain MIT 9312).